The chain runs to 641 residues: Uromodulin (641 aa).

An N-terminal signal peptide occupies residues 1 to 24; it reads MGQPPLTWMLMVVVASWFITTAAT. N-linked (GlcNAc...) asparagine glycosylation is present at asparagine 25. An EGF-like 1 domain is found at 28-64; it reads EARWCSECHSNATCTEDEAVTTCTCQEGFTGDGLTCV. Disulfide bonds link cysteine 32-cysteine 41, cysteine 35-cysteine 50, cysteine 52-cysteine 63, cysteine 69-cysteine 83, cysteine 77-cysteine 92, cysteine 94-cysteine 106, cysteine 112-cysteine 126, cysteine 120-cysteine 135, cysteine 137-cysteine 148, cysteine 150-cysteine 161, cysteine 155-cysteine 170, cysteine 174-cysteine 267, cysteine 195-cysteine 282, cysteine 217-cysteine 255, cysteine 223-cysteine 287, cysteine 248-cysteine 256, cysteine 297-cysteine 306, cysteine 300-cysteine 315, cysteine 317-cysteine 347, cysteine 335-cysteine 425, and cysteine 366-cysteine 389. The region spanning 65 to 107 is the EGF-like 2; calcium-binding domain; the sequence is DLDECAIPGAHNCSANSSCVNTPGSFSCVCPEGFRLSPGLGCT. A glycan (N-linked (GlcNAc...) asparagine) is linked at asparagine 76. Positions 108 to 149 constitute an EGF-like 3; calcium-binding domain; that stretch reads DVDECAEPGLSHCHALATCVNVVGNYLCVCPAGYRGDGWHCE. The interval 150-171 is beta hairpin; the sequence is CSPGSCGPGLDCVPEGDALVCA. Positions 172-291 are D10C; the sequence is DPCQAHRTLD…CHLAYCTDPS (120 aa). N-linked (GlcNAc...) asparagine glycosylation occurs at asparagine 232. Residue asparagine 275 is glycosylated (N-linked (GlcNAc...) asparagine). The EGF-like 4 domain maps to 292 to 323; that stretch reads SVEGTCEECSIDEDCKSDNGRWHCQCKQDFNI. Asparagine 322 carries an N-linked (GlcNAc...) asparagine glycan. Residues 334-429 are ZP-N; that stretch reads ECGANDMKVS…KINFACSYPL (96 aa). One can recognise a ZP domain in the interval 334–589; that stretch reads ECGANDMKVS…PTCSGTRFRS (256 aa). The tract at residues 430-453 is flexible ZP-N/ZP-C linker; important for secretion and polymerization into filaments; that stretch reads DMKVSLKTSLQPVVSALNITVGGT. The N-linked (GlcNAc...) asparagine glycan is linked to asparagine 447. The segment at 454-464 is internal hydrophobic patch (IHP); it reads GMFTVRMALFQ. The interval 454-589 is ZP-C; it reads GMFTVRMALF…PTCSGTRFRS (136 aa). 3 disulfide bridges follow: cysteine 506-cysteine 566, cysteine 527-cysteine 582, and cysteine 571-cysteine 578. Residues 586-589 form an essential for cleavage by HPN region; the sequence is RFRS. The segment at 598–606 is external hydrophobic patch (EHP); regulates polymerization into filaments; sequence VLNLGPITR. The GPI-anchor amidated serine moiety is linked to residue serine 614. The propeptide at 615 to 641 is removed in mature form; that stretch reads RAAFSSLGLLKVWLPLLLSATLTLTFQ.

As to quaternary structure, homodimer that then polymerizes into long filaments. The filaments can additionally assemble laterally to form a sheet. The filaments consist of a zigzag-shaped backbone with laterally protruding arms which interact with bacterial adhesin fimH. Two fimH molecules can bind to a single UMOD monomer. In terms of processing, N-glycosylated. Proteolytically cleaved at a conserved C-terminal proteolytic cleavage site to generate the secreted form found in urine. This cleavage is catalyzed by HPN.

Its subcellular location is the apical cell membrane. It is found in the basolateral cell membrane. The protein localises to the cell projection. The protein resides in the cilium membrane. It localises to the secreted. Functions in biogenesis and organization of the apical membrane of epithelial cells of the thick ascending limb of Henle's loop (TALH), where it promotes formation of complex filamentous gel-like structure that may play a role in the water barrier permeability. May serve as a receptor for binding and endocytosis of cytokines (IL-1, IL-2) and TNF. Facilitates neutrophil migration across renal epithelia. In terms of biological role, in the urine, may contribute to colloid osmotic pressure, retards passage of positively charged electrolytes, and inhibits formation of liquid containing supersaturated salts and subsequent formation of salt crystals. Protects against urinary tract infections by binding to type 1 fimbriated E.coli. Binds to bacterial adhesin fimH which mediates the stable formation of bacterial aggregates, prevents the binding of E.coli to uroplakins UPK1A and UPK1B which act as urothelial receptors for type I fimbriae, and allows for pathogen clearance through micturation. Also promotes aggregation of other bacteria including K.pneumoniae, P.aeruginosa and S.mitis and so may also protect against other uropathogens. This chain is Uromodulin (UMOD), found in Pongo abelii (Sumatran orangutan).